The chain runs to 478 residues: MACLNPVPKLYRSVIEDVIEGVRNLFAEEGIEEQVLKDLKQLWETKVLQSKATEDFFRNSIQSPLFTLQLPHSLHQTLQSSTASLVIPAGRTLPSFTTAELGTSNSSANFTFPGYPIHVPAGVTLQTVSGHLYKVNVPIMVTETSGRAGILQHPIQQVFQQLGQPSVIQTSVPQLNPWSLQATTEKSQRIETVLQQPAILPSGPVDRKHLENATSDILVSPGNEHKIVPEALLCHQESSHYISLPGVVFSPQVSQTNSNVESVLSGSASMAQNLHDESLSTSPHGALHQHVTDIQLHILKNRMYGCDSVKQPRNIEEPSNIPVSEKDSNSQVDLSIRVTDDDIGEIIQVDGSGDTSSNEEIGSTRDADENEFLGNIDGGDLKVPEEEADSISNEDSATNSSDNEDPQVNIVEEDPLNSGDDVSEQDVPDLFDTDNVIVCQYDKIHRSKNKWKFYLKDGVMCFGGRDYVFAKAIGDAEW.

The segment at 309–427 (VKQPRNIEEP…SGDDVSEQDV (119 aa)) is disordered. Over residues 390-401 (SISNEDSATNSS) the composition is skewed to polar residues. The span at 411–427 (VEEDPLNSGDDVSEQDV) shows a compositional bias: acidic residues.

This sequence belongs to the TFIIA subunit 1 family. Testis specific. Detected in adult testis mostly in round and elongating spermatids (at protein level). Detected in testis.

The protein resides in the nucleus. May function as a testis specific transcription factor. Binds DNA in conjunction with GTF2A2 and TBP (the TATA-binding protein) and together with GTF2A2, allows mRNA transcription. In Homo sapiens (Human), this protein is TFIIA-alpha and beta-like factor (GTF2A1L).